The sequence spans 787 residues: Protein translocase subunit SecA (787 aa).

ATP is bound by residues Q85, 103 to 107, and D492; that span reads GEGKT.

Belongs to the SecA family. In terms of assembly, monomer and homodimer. Part of the essential Sec protein translocation apparatus which comprises SecA, SecYEG and auxiliary proteins SecDF. Other proteins may also be involved.

The protein resides in the cell membrane. It localises to the cytoplasm. It carries out the reaction ATP + H2O + cellular proteinSide 1 = ADP + phosphate + cellular proteinSide 2.. In terms of biological role, part of the Sec protein translocase complex. Interacts with the SecYEG preprotein conducting channel. Has a central role in coupling the hydrolysis of ATP to the transfer of proteins into and across the cell membrane, serving as an ATP-driven molecular motor driving the stepwise translocation of polypeptide chains across the membrane. The polypeptide is Protein translocase subunit SecA (Lacticaseibacillus casei (strain BL23) (Lactobacillus casei)).